A 90-amino-acid polypeptide reads, in one-letter code: Small ribosomal subunit protein uS15 (90 aa).

It belongs to the universal ribosomal protein uS15 family. Part of the 30S ribosomal subunit. Forms a bridge to the 50S subunit in the 70S ribosome, contacting the 23S rRNA.

Functionally, one of the primary rRNA binding proteins, it binds directly to 16S rRNA where it helps nucleate assembly of the platform of the 30S subunit by binding and bridging several RNA helices of the 16S rRNA. Forms an intersubunit bridge (bridge B4) with the 23S rRNA of the 50S subunit in the ribosome. The chain is Small ribosomal subunit protein uS15 from Aquifex aeolicus (strain VF5).